The following is a 423-amino-acid chain: Enolase (423 aa).

Q162 is a binding site for (2R)-2-phosphoglycerate. The active-site Proton donor is the E204. Mg(2+) contacts are provided by D241, E284, and D311. Residues K336, R365, S366, and K387 each coordinate (2R)-2-phosphoglycerate. The active-site Proton acceptor is the K336.

The protein belongs to the enolase family. Mg(2+) is required as a cofactor.

The protein resides in the cytoplasm. The protein localises to the secreted. It is found in the cell surface. It catalyses the reaction (2R)-2-phosphoglycerate = phosphoenolpyruvate + H2O. It functions in the pathway carbohydrate degradation; glycolysis; pyruvate from D-glyceraldehyde 3-phosphate: step 4/5. Its function is as follows. Catalyzes the reversible conversion of 2-phosphoglycerate (2-PG) into phosphoenolpyruvate (PEP). It is essential for the degradation of carbohydrates via glycolysis. In Bartonella bacilliformis (strain ATCC 35685 / KC583 / Herrer 020/F12,63), this protein is Enolase.